Reading from the N-terminus, the 474-residue chain is Ribulose bisphosphate carboxylase large chain (474 aa).

Lysine 13 bears the N6,N6,N6-trimethyllysine mark. 2 residues coordinate substrate: asparagine 122 and threonine 172. Lysine 174 functions as the Proton acceptor in the catalytic mechanism. Substrate is bound at residue lysine 176. Positions 200, 202, and 203 each coordinate Mg(2+). Lysine 200 is modified (N6-carboxylysine). The active-site Proton acceptor is the histidine 293. 3 residues coordinate substrate: arginine 294, histidine 326, and serine 378.

Belongs to the RuBisCO large chain family. Type I subfamily. In terms of assembly, heterohexadecamer of 8 large chains and 8 small chains; disulfide-linked. The disulfide link is formed within the large subunit homodimers. The cofactor is Mg(2+). The disulfide bond which can form in the large chain dimeric partners within the hexadecamer appears to be associated with oxidative stress and protein turnover.

It localises to the plastid. Its subcellular location is the chloroplast. It catalyses the reaction 2 (2R)-3-phosphoglycerate + 2 H(+) = D-ribulose 1,5-bisphosphate + CO2 + H2O. It carries out the reaction D-ribulose 1,5-bisphosphate + O2 = 2-phosphoglycolate + (2R)-3-phosphoglycerate + 2 H(+). Its function is as follows. RuBisCO catalyzes two reactions: the carboxylation of D-ribulose 1,5-bisphosphate, the primary event in carbon dioxide fixation, as well as the oxidative fragmentation of the pentose substrate in the photorespiration process. Both reactions occur simultaneously and in competition at the same active site. The polypeptide is Ribulose bisphosphate carboxylase large chain (Dendrophthora clavata (Columbian mistletoe)).